A 157-amino-acid chain; its full sequence is Small ribosomal subunit protein uS7 (157 aa).

The protein belongs to the universal ribosomal protein uS7 family. Part of the 30S ribosomal subunit. Contacts proteins S9 and S11.

One of the primary rRNA binding proteins, it binds directly to 16S rRNA where it nucleates assembly of the head domain of the 30S subunit. Is located at the subunit interface close to the decoding center, probably blocks exit of the E-site tRNA. The polypeptide is Small ribosomal subunit protein uS7 (Salinibacter ruber (strain DSM 13855 / M31)).